Here is a 286-residue protein sequence, read N- to C-terminus: Cytotoxin (286 aa).

Residues 267–286 constitute a propeptide that is removed on maturation; the sequence is TFYNYASLVPDLETRVRSAE.

It belongs to the aerolysin family.

The protein localises to the secreted. Cytotoxin is thought to form hydrophilic pores in cell membranes. The polypeptide is Cytotoxin (ctx) (Pseudomonas aeruginosa).